The sequence spans 560 residues: DNA ligase B (560 aa).

Lys-124 (N6-AMP-lysine intermediate) is an active-site residue.

It belongs to the NAD-dependent DNA ligase family. LigB subfamily.

It carries out the reaction NAD(+) + (deoxyribonucleotide)n-3'-hydroxyl + 5'-phospho-(deoxyribonucleotide)m = (deoxyribonucleotide)n+m + AMP + beta-nicotinamide D-nucleotide.. In terms of biological role, catalyzes the formation of phosphodiester linkages between 5'-phosphoryl and 3'-hydroxyl groups in double-stranded DNA using NAD as a coenzyme and as the energy source for the reaction. This Citrobacter koseri (strain ATCC BAA-895 / CDC 4225-83 / SGSC4696) protein is DNA ligase B.